Consider the following 952-residue polypeptide: Glycine dehydrogenase (decarboxylating) (952 aa).

The residue at position 703 (lysine 703) is an N6-(pyridoxal phosphate)lysine.

This sequence belongs to the GcvP family. The glycine cleavage system is composed of four proteins: P, T, L and H. The cofactor is pyridoxal 5'-phosphate.

It carries out the reaction N(6)-[(R)-lipoyl]-L-lysyl-[glycine-cleavage complex H protein] + glycine + H(+) = N(6)-[(R)-S(8)-aminomethyldihydrolipoyl]-L-lysyl-[glycine-cleavage complex H protein] + CO2. Its function is as follows. The glycine cleavage system catalyzes the degradation of glycine. The P protein binds the alpha-amino group of glycine through its pyridoxal phosphate cofactor; CO(2) is released and the remaining methylamine moiety is then transferred to the lipoamide cofactor of the H protein. The polypeptide is Glycine dehydrogenase (decarboxylating) (Mycolicibacterium gilvum (strain PYR-GCK) (Mycobacterium gilvum (strain PYR-GCK))).